The sequence spans 73 residues: Maltose-binding periplasmic protein (73 aa).

Positions 1–30 are cleaved as a signal peptide; the sequence is MMTKTNLKMGARTLALSVLATLVLSASALA.

It belongs to the bacterial solute-binding protein 1 family.

The protein resides in the periplasm. Involved in the high-affinity maltose membrane transport system. Initial receptor for the active transport of and chemotaxis toward maltooligosaccharides. The protein is Maltose-binding periplasmic protein (malE) of Photorhabdus luminescens (Xenorhabdus luminescens).